The primary structure comprises 262 residues: MNSKRDLAVAISFFVFGASVLYSLAHMQISPGVNEVYLTHYIIPNYVCAVIFDWRAYDTLGECLVLVVAVMVSWIVFGKSLYDNTYLKELFHAPESDDYITLQGWGEYTPIIKFLAFPMSVLMVALGIITVLGGHITPGGGFQGGALIAAAFILSVIAFGSNSPLWFDHKFLEKLEALGALGYLLLGVAGMFIGGYYLFNFTEINGFTIFPAPKEIITAGIIPYLNIAVGLKVLAGLSTAAFLLSCEKVIIEKISKSEEKLE.

Helical transmembrane passes span 7–27 (LAVA…LAHM), 58–78 (DTLG…IVFG), 114–134 (FLAF…VLGG), 140–160 (GGFQ…IAFG), 179–199 (GALG…YYLF), and 216–236 (IITA…VLAG).

The protein localises to the cell membrane. This is an uncharacterized protein from Methanocaldococcus jannaschii (strain ATCC 43067 / DSM 2661 / JAL-1 / JCM 10045 / NBRC 100440) (Methanococcus jannaschii).